A 100-amino-acid polypeptide reads, in one-letter code: Co-chaperonin GroES (100 aa).

This sequence belongs to the GroES chaperonin family. As to quaternary structure, heptamer of 7 subunits arranged in a ring. Interacts with the chaperonin GroEL.

It localises to the cytoplasm. Functionally, together with the chaperonin GroEL, plays an essential role in assisting protein folding. The GroEL-GroES system forms a nano-cage that allows encapsulation of the non-native substrate proteins and provides a physical environment optimized to promote and accelerate protein folding. GroES binds to the apical surface of the GroEL ring, thereby capping the opening of the GroEL channel. This chain is Co-chaperonin GroES, found in Mycobacterium leprae (strain Br4923).